The chain runs to 792 residues: Kinesin-related protein 2 (792 aa).

Disordered stretches follow at residues 22-50 and 162-183; these read TINSRPSLLRKPASSSSQSNDRISYPPST and NNININSNNSSNSNNNILSPVQ. Residues 34-50 are compositionally biased toward polar residues; the sequence is ASSSSQSNDRISYPPST. Positions 284 to 423 form a coiled coil; sequence RLSLSIQDIK…LEKSRSDEKV (140 aa). One can recognise a Kinesin motor domain in the interval 437-781; that stretch reads NIRVFCRIRP…LRFAAKVNSC (345 aa). 528-535 is an ATP binding site; it reads GQTGSGKT.

Belongs to the TRAFAC class myosin-kinesin ATPase superfamily. Kinesin family. NCD subfamily.

The protein localises to the nucleus. It localises to the cytoplasm. Its subcellular location is the cytoskeleton. It is found in the spindle. Functionally, microtubule-dependent motor that is probably involved in microtubule organization in the mitotic spindle. This chain is Kinesin-related protein 2 (kif2), found in Dictyostelium discoideum (Social amoeba).